The sequence spans 116 residues: Large ribosomal subunit protein bL19 (116 aa).

It belongs to the bacterial ribosomal protein bL19 family.

In terms of biological role, this protein is located at the 30S-50S ribosomal subunit interface and may play a role in the structure and function of the aminoacyl-tRNA binding site. This is Large ribosomal subunit protein bL19 from Magnetococcus marinus (strain ATCC BAA-1437 / JCM 17883 / MC-1).